The sequence spans 417 residues: NADH-quinone oxidoreductase subunit D (417 aa).

Belongs to the complex I 49 kDa subunit family. As to quaternary structure, NDH-1 is composed of 14 different subunits. Subunits NuoB, C, D, E, F, and G constitute the peripheral sector of the complex.

Its subcellular location is the cell inner membrane. The enzyme catalyses a quinone + NADH + 5 H(+)(in) = a quinol + NAD(+) + 4 H(+)(out). Functionally, NDH-1 shuttles electrons from NADH, via FMN and iron-sulfur (Fe-S) centers, to quinones in the respiratory chain. The immediate electron acceptor for the enzyme in this species is believed to be ubiquinone. Couples the redox reaction to proton translocation (for every two electrons transferred, four hydrogen ions are translocated across the cytoplasmic membrane), and thus conserves the redox energy in a proton gradient. The protein is NADH-quinone oxidoreductase subunit D of Acidovorax sp. (strain JS42).